Consider the following 159-residue polypeptide: MKHTIAVLVENKPGVLARVAGLFRRRGFNIESLTVGTTERDDLSRMTIVVEGDDKVVEQVIKQLNKLIETIKVSEITESSVERELCLIRVHAPPEKRGEIVELTNIFRARIVDVSRDSFIIEVTGDEDKVSAFIDLMRQYGIKELARTGKVAMVRGNKK.

The ACT domain maps to 4–78 (TIAVLVENKP…ETIKVSEITE (75 aa)).

It belongs to the acetolactate synthase small subunit family. As to quaternary structure, dimer of large and small chains.

It carries out the reaction 2 pyruvate + H(+) = (2S)-2-acetolactate + CO2. It participates in amino-acid biosynthesis; L-isoleucine biosynthesis; L-isoleucine from 2-oxobutanoate: step 1/4. The protein operates within amino-acid biosynthesis; L-valine biosynthesis; L-valine from pyruvate: step 1/4. This chain is Probable acetolactate synthase small subunit (ilvH), found in Archaeoglobus fulgidus (strain ATCC 49558 / DSM 4304 / JCM 9628 / NBRC 100126 / VC-16).